Consider the following 382-residue polypeptide: UDP-4-amino-4-deoxy-L-arabinose--oxoglutarate aminotransferase (382 aa).

Lysine 182 carries the post-translational modification N6-(pyridoxal phosphate)lysine.

It belongs to the DegT/DnrJ/EryC1 family. ArnB subfamily. Homodimer. The cofactor is pyridoxal 5'-phosphate.

It catalyses the reaction UDP-4-amino-4-deoxy-beta-L-arabinose + 2-oxoglutarate = UDP-beta-L-threo-pentopyranos-4-ulose + L-glutamate. It functions in the pathway nucleotide-sugar biosynthesis; UDP-4-deoxy-4-formamido-beta-L-arabinose biosynthesis; UDP-4-deoxy-4-formamido-beta-L-arabinose from UDP-alpha-D-glucuronate: step 2/3. It participates in bacterial outer membrane biogenesis; lipopolysaccharide biosynthesis. Functionally, catalyzes the conversion of UDP-4-keto-arabinose (UDP-Ara4O) to UDP-4-amino-4-deoxy-L-arabinose (UDP-L-Ara4N). The modified arabinose is attached to lipid A and is required for resistance to polymyxin and cationic antimicrobial peptides. The chain is UDP-4-amino-4-deoxy-L-arabinose--oxoglutarate aminotransferase from Pectobacterium atrosepticum (strain SCRI 1043 / ATCC BAA-672) (Erwinia carotovora subsp. atroseptica).